We begin with the raw amino-acid sequence, 232 residues long: 2,3-bisphosphoglycerate-dependent phosphoglycerate mutase (232 aa).

Substrate-binding positions include 10–17 (RHGESQWN), 23–24 (TG), Arg-62, 89–92 (ERHY), Lys-100, 116–117 (RR), and 186–187 (GN). His-11 functions as the Tele-phosphohistidine intermediate in the catalytic mechanism. Glu-89 serves as the catalytic Proton donor/acceptor.

It belongs to the phosphoglycerate mutase family. BPG-dependent PGAM subfamily. As to quaternary structure, homodimer.

It carries out the reaction (2R)-2-phosphoglycerate = (2R)-3-phosphoglycerate. The protein operates within carbohydrate degradation; glycolysis; pyruvate from D-glyceraldehyde 3-phosphate: step 3/5. Its function is as follows. Catalyzes the interconversion of 2-phosphoglycerate and 3-phosphoglycerate. The sequence is that of 2,3-bisphosphoglycerate-dependent phosphoglycerate mutase from Blochmanniella pennsylvanica (strain BPEN).